Here is a 493-residue protein sequence, read N- to C-terminus: Glutamyl-tRNA(Gln) amidotransferase subunit A (493 aa).

Catalysis depends on charge relay system residues K79 and S159. Residue S183 is the Acyl-ester intermediate of the active site.

The protein belongs to the amidase family. GatA subfamily. In terms of assembly, heterotrimer of A, B and C subunits.

It carries out the reaction L-glutamyl-tRNA(Gln) + L-glutamine + ATP + H2O = L-glutaminyl-tRNA(Gln) + L-glutamate + ADP + phosphate + H(+). Its function is as follows. Allows the formation of correctly charged Gln-tRNA(Gln) through the transamidation of misacylated Glu-tRNA(Gln) in organisms which lack glutaminyl-tRNA synthetase. The reaction takes place in the presence of glutamine and ATP through an activated gamma-phospho-Glu-tRNA(Gln). In Brucella suis biovar 1 (strain 1330), this protein is Glutamyl-tRNA(Gln) amidotransferase subunit A.